Reading from the N-terminus, the 354-residue chain is UPF0283 protein YcjF (354 aa).

3 helical membrane-spanning segments follow: residues 71-91 (MVTVGIALFGVSVIAQSVQWV), 101-121 (IALGATTAGGLIVLAGVGSVV), and 214-234 (ESALMIAVSPLALVDMAFIAW).

The protein belongs to the UPF0283 family.

It is found in the cell inner membrane. This Yersinia enterocolitica protein is UPF0283 protein YcjF (ycjF).